The following is a 160-amino-acid chain: Peripheral myelin protein 22 (160 aa).

Position 1 (Met-1) is a topological domain, cytoplasmic. The chain crosses the membrane as a helical span at residues 2–31; the sequence is LLLLLGILFLHIAVLVLLFVSTIVSQWLVG. At 32-64 the chain is on the extracellular side; that stretch reads NGHRTDLWQNCTTSALGAVQHCYSSSVSEWLQS. The N-linked (GlcNAc...) asparagine glycan is linked to Asn-41. A helical membrane pass occupies residues 65–91; the sequence is VQATMILSVIFSVLSLFLFFCQLFTLT. Residues 92–95 lie on the Cytoplasmic side of the membrane; the sequence is KGGR. The chain crosses the membrane as a helical span at residues 96-119; sequence FYITGVFQILAGLCVMSAAAIYTV. At 120 to 133 the chain is on the extracellular side; the sequence is RHSEWHVNNDYSYG. The chain crosses the membrane as a helical span at residues 134 to 156; that stretch reads FAYILAWVAFPLALLSGIIYVIL. The Cytoplasmic portion of the chain corresponds to 157–160; sequence RKRE.

The protein belongs to the PMP-22/EMP/MP20 family. Post-translationally, ubiquitinated by the DCX(DCAF13) E3 ubiquitin ligase complex, leading to its degradation. Found exclusively in the peripheral nervous system. Present in both myelinating and nonmyelinating Schwann cells. Found in the tumors of Schwann cell lineage where axons are present (neurofibromas) but not where axons are absent (schwannomas).

It is found in the cell membrane. Its function is as follows. Might be involved in growth regulation, and in myelinization in the peripheral nervous system. In Rattus norvegicus (Rat), this protein is Peripheral myelin protein 22 (Pmp22).